A 64-amino-acid polypeptide reads, in one-letter code: Conotoxin Ca5.3 (64 aa).

The signal sequence occupies residues 1-22; it reads MRCVPVFIILLLLIASAPGVDA. The propeptide occupies 23 to 48; it reads QPKTKYNAPLTSLHDNAKGILQEHWN. Isoleucine amide is present on I61.

This sequence belongs to the conotoxin T superfamily. Contains 2 disulfide bonds that can be either 'C1-C3, C2-C4' or 'C1-C4, C2-C3', since these disulfide connectivities have been observed for conotoxins with cysteine framework V (for examples, see AC P0DQQ7 and AC P81755). Expressed by the venom duct.

The protein localises to the secreted. The protein is Conotoxin Ca5.3 of Conus caracteristicus (Characteristic cone).